Consider the following 176-residue polypeptide: Nascent polypeptide-associated complex subunit alpha (176 aa).

Residues 16–80 (PKNEKKAREL…AKVDDMNQRI (65 aa)) enclose the NAC-A/B domain. Positions 83 to 110 (AQAAQAAETDAHAGHTHSHGEEDKSPEA) are disordered. The segment covering 91 to 110 (TDAHAGHTHSHGEEDKSPEA) has biased composition (basic and acidic residues). In terms of domain architecture, UBA spans 138-175 (LDAKDIDIIVEQTQVSRAKAVKALRKHDGDMVNAIMEL).

The protein belongs to the NAC-alpha family. As to quaternary structure, part of the nascent polypeptide-associated complex (NAC), consisting of EGD2 and EGD1. NAC associates with ribosomes via EGD1.

The protein resides in the cytoplasm. The protein localises to the nucleus. Its function is as follows. Component of the nascent polypeptide-associated complex (NAC), a dynamic component of the ribosomal exit tunnel, protecting the emerging polypeptides from interaction with other cytoplasmic proteins to ensure appropriate nascent protein targeting. The NAC complex also promotes mitochondrial protein import by enhancing productive ribosome interactions with the outer mitochondrial membrane and blocks the inappropriate interaction of ribosomes translating non-secretory nascent polypeptides with translocation sites in the membrane of the endoplasmic reticulum. EGD2 may also be involved in transcription regulation. This Scheffersomyces stipitis (strain ATCC 58785 / CBS 6054 / NBRC 10063 / NRRL Y-11545) (Yeast) protein is Nascent polypeptide-associated complex subunit alpha (EGD2).